Here is a 158-residue protein sequence, read N- to C-terminus: Lipoprotein signal peptidase (158 aa).

The next 4 helical transmembrane spans lie at 7–27 (LFWI…YWVV), 38–58 (ILPG…FSLF), 67–87 (WLSL…PVLE), and 95–115 (GLIL…GYVV). Catalysis depends on residues D116 and D132. A helical membrane pass occupies residues 125 to 145 (FAVFNMADSFISIGIVCLLLA).

Belongs to the peptidase A8 family.

It localises to the cell inner membrane. It catalyses the reaction Release of signal peptides from bacterial membrane prolipoproteins. Hydrolyzes -Xaa-Yaa-Zaa-|-(S,diacylglyceryl)Cys-, in which Xaa is hydrophobic (preferably Leu), and Yaa (Ala or Ser) and Zaa (Gly or Ala) have small, neutral side chains.. It functions in the pathway protein modification; lipoprotein biosynthesis (signal peptide cleavage). Its function is as follows. This protein specifically catalyzes the removal of signal peptides from prolipoproteins. The polypeptide is Lipoprotein signal peptidase (Trichormus variabilis (strain ATCC 29413 / PCC 7937) (Anabaena variabilis)).